The following is a 341-amino-acid chain: Uroporphyrinogen decarboxylase (341 aa).

Substrate contacts are provided by residues 23–27 (RQAGR), D73, Y147, S202, and H318.

The protein belongs to the uroporphyrinogen decarboxylase family. Homodimer.

It is found in the cytoplasm. The enzyme catalyses uroporphyrinogen III + 4 H(+) = coproporphyrinogen III + 4 CO2. Its pathway is porphyrin-containing compound metabolism; protoporphyrin-IX biosynthesis; coproporphyrinogen-III from 5-aminolevulinate: step 4/4. Its function is as follows. Catalyzes the decarboxylation of four acetate groups of uroporphyrinogen-III to yield coproporphyrinogen-III. In Erythrobacter litoralis (strain HTCC2594), this protein is Uroporphyrinogen decarboxylase.